The chain runs to 344 residues: N-acetyl-gamma-glutamyl-phosphate reductase (344 aa).

The active site involves Cys150.

Belongs to the NAGSA dehydrogenase family. Type 1 subfamily.

The protein localises to the cytoplasm. It catalyses the reaction N-acetyl-L-glutamate 5-semialdehyde + phosphate + NADP(+) = N-acetyl-L-glutamyl 5-phosphate + NADPH + H(+). It participates in amino-acid biosynthesis; L-arginine biosynthesis; N(2)-acetyl-L-ornithine from L-glutamate: step 3/4. Its function is as follows. Catalyzes the NADPH-dependent reduction of N-acetyl-5-glutamyl phosphate to yield N-acetyl-L-glutamate 5-semialdehyde. The protein is N-acetyl-gamma-glutamyl-phosphate reductase of Pseudomonas putida (strain W619).